We begin with the raw amino-acid sequence, 333 residues long: Atrochrysone carboxyl ACP thioesterase MYCFIDRAFT_190111 (333 aa).

Zn(2+) is bound by residues His-108, His-110, Asp-112, and His-113. Catalysis depends on Asp-112, which acts as the Proton donor/acceptor.

Belongs to the metallo-beta-lactamase superfamily. It depends on Zn(2+) as a cofactor.

The catalysed reaction is atrochrysone carboxyl-[ACP] + H2O = atrochrysone carboxylate + holo-[ACP] + H(+). Its pathway is secondary metabolite biosynthesis. Atrochrysone carboxyl ACP thioesterase; part of the gene cluster that mediates the biosynthesis of an emodin derivative that may be involved in black Sigatoka disease of banana. The pathway begins with the synthesis of atrochrysone thioester by the polyketide synthase PKS8-1. The atrochrysone carboxyl ACP thioesterase MYCFIDRAFT_190111 then breaks the thioester bond and releases the atrochrysone carboxylic acid from PKS8-1. The decarboxylase MYCFIDRAFT_34057 then catalyzes the concerted decarboxylation-elimination required to convert atochrysone carboxylic acid into emodin anthrone, which is further oxidized to emodin by the anthrone oxygenase MYCFIDRAFT_34418. The functions of the other tailoring enzymes as well as the final product of the cluster have still to be identified. The chain is Atrochrysone carboxyl ACP thioesterase MYCFIDRAFT_190111 from Pseudocercospora fijiensis (strain CIRAD86) (Black leaf streak disease fungus).